A 138-amino-acid polypeptide reads, in one-letter code: Probable prefoldin subunit 4 (138 aa).

Belongs to the prefoldin subunit beta family. Heterohexamer of two PFD-alpha type and four PFD-beta type subunits.

Binds specifically to cytosolic chaperonin (c-CPN) and transfers target proteins to it. Binds to nascent polypeptide chain and promotes folding in an environment in which there are many competing pathways for nonnative proteins. The sequence is that of Probable prefoldin subunit 4 from Drosophila melanogaster (Fruit fly).